The following is a 510-amino-acid chain: Cytochrome P450 705A20 (510 aa).

Residues 7–27 (QHCFSFILLCFFSLLCYSLLF) traverse the membrane as a helical segment.

It belongs to the cytochrome P450 family. Requires heme as cofactor.

It is found in the membrane. The chain is Cytochrome P450 705A20 (CYP705A20) from Arabidopsis thaliana (Mouse-ear cress).